We begin with the raw amino-acid sequence, 142 residues long: Small ribosomal subunit protein uS12 (142 aa).

It belongs to the universal ribosomal protein uS12 family. As to quaternary structure, part of the 30S ribosomal subunit.

Functionally, with S4 and S5 plays an important role in translational accuracy. Located at the interface of the 30S and 50S subunits. In Methanoculleus marisnigri (strain ATCC 35101 / DSM 1498 / JR1), this protein is Small ribosomal subunit protein uS12.